The sequence spans 145 residues: Large ribosomal subunit protein uL15 (145 aa).

Residues 1 to 52 (MKLNTIAPAEGSKKDRRRVGRGIGSGFGKTAGRGHKGQHARSGGYHKVGFEG) form a disordered region. Positions 21–31 (RGIGSGFGKTA) are enriched in gly residues.

Belongs to the universal ribosomal protein uL15 family. In terms of assembly, part of the 50S ribosomal subunit.

Binds to the 23S rRNA. This is Large ribosomal subunit protein uL15 from Acidithiobacillus ferrooxidans (strain ATCC 53993 / BNL-5-31) (Leptospirillum ferrooxidans (ATCC 53993)).